The following is an 83-amino-acid chain: Toxin AahP985 (83 aa).

Positions 1 to 18 are cleaved as a signal peptide; sequence MNYLVMISLALLIAGVDS. The LCN-type CS-alpha/beta domain maps to 20–82; the sequence is RDAYIAKNDN…VPIKLSGECH (63 aa). Disulfide bonds link cysteine 30/cysteine 81, cysteine 34/cysteine 54, cysteine 40/cysteine 64, and cysteine 44/cysteine 66.

Belongs to the long (4 C-C) scorpion toxin superfamily. Sodium channel inhibitor family. Alpha subfamily. As to expression, expressed by the venom gland.

Its subcellular location is the secreted. Functionally, binds voltage-independently at site-3 of sodium channels (Nav) and inhibits the inactivation of the activated channels, thereby blocking neuronal transmission. In Androctonus australis (Sahara scorpion), this protein is Toxin AahP985.